Here is a 445-residue protein sequence, read N- to C-terminus: Argininosuccinate synthase (445 aa).

Residues 17–25 (AFSGGLDTS) and Ala-43 each bind ATP. Tyr-99 contributes to the L-citrulline binding site. Residues Gly-129 and Thr-131 each contribute to the ATP site. Residues Thr-131, Asn-135, and Asp-136 each contribute to the L-aspartate site. Asn-135 contacts L-citrulline. Asp-136 contacts ATP. 2 residues coordinate L-citrulline: Arg-139 and Ser-192. Asp-194 is an ATP binding site. L-citrulline contacts are provided by Thr-201, Glu-203, and Glu-280.

It belongs to the argininosuccinate synthase family. Type 2 subfamily. Homotetramer.

Its subcellular location is the cytoplasm. It catalyses the reaction L-citrulline + L-aspartate + ATP = 2-(N(omega)-L-arginino)succinate + AMP + diphosphate + H(+). Its pathway is amino-acid biosynthesis; L-arginine biosynthesis; L-arginine from L-ornithine and carbamoyl phosphate: step 2/3. This Ralstonia pickettii (strain 12J) protein is Argininosuccinate synthase.